A 1023-amino-acid chain; its full sequence is DNA polymerase (1023 aa).

The interval 726 to 751 is disordered; that stretch reads QTDATRKHRQCTPTSNSSSDEDAPFY.

It belongs to the DNA polymerase type-B family. As to quaternary structure, heterodimer with the terminal protein; this heterodimer binds to bp 9 to 18 of the genome. Forms a complex with viral pTP, DBP and hosts NFIA and POU2F1/OCT1 for initiation of replication.

It is found in the host nucleus. It carries out the reaction DNA(n) + a 2'-deoxyribonucleoside 5'-triphosphate = DNA(n+1) + diphosphate. Its function is as follows. Eukaryotic-type DNA polymerase involved in viral genomic replication. DNA synthesis is protein primed, and acts in a strand displacement replication. Assembles in complex with viral pTP, DBP, host NFIA and host POU2F1/OCT1 on viral origin of replication. The polymerase covalently transfers dCMP onto pTP, thereby initiating complementary strand synthesis. This chain is DNA polymerase, found in Bovine adenovirus B serotype 3 (BAdV-3).